The sequence spans 256 residues: Hydroxyacylglutathione hydrolase (256 aa).

Residues H58, H60, D62, H63, H116, D135, and H173 each contribute to the Zn(2+) site.

Belongs to the metallo-beta-lactamase superfamily. Glyoxalase II family. Monomer. It depends on Zn(2+) as a cofactor.

The catalysed reaction is an S-(2-hydroxyacyl)glutathione + H2O = a 2-hydroxy carboxylate + glutathione + H(+). Its pathway is secondary metabolite metabolism; methylglyoxal degradation; (R)-lactate from methylglyoxal: step 2/2. Its function is as follows. Thiolesterase that catalyzes the hydrolysis of S-D-lactoyl-glutathione to form glutathione and D-lactic acid. The sequence is that of Hydroxyacylglutathione hydrolase from Hyphomonas neptunium (strain ATCC 15444).